Reading from the N-terminus, the 360-residue chain is DNA replication and repair protein RecF (360 aa).

Gly33–Thr40 is an ATP binding site.

The protein belongs to the RecF family.

It localises to the cytoplasm. Its function is as follows. The RecF protein is involved in DNA metabolism; it is required for DNA replication and normal SOS inducibility. RecF binds preferentially to single-stranded, linear DNA. It also seems to bind ATP. This Rickettsia peacockii (strain Rustic) protein is DNA replication and repair protein RecF.